Consider the following 871-residue polypeptide: Dual O-methyltransferase/FAD-dependent monooxygenase CTB3 (871 aa).

The tract at residues Met-1 to Gln-429 is O-methyltransferase. Asp-279 provides a ligand contact to S-adenosyl-L-methionine. His-331 acts as the Proton acceptor in catalysis. The FAD-dependent monooxygenase stretch occupies residues Thr-430–Phe-871. Positions 485, 569, 793, and 806 each coordinate FAD.

The protein in the C-terminal section; belongs to the paxM FAD-dependent monooxygenase family. In the N-terminal section; belongs to the class I-like SAM-binding methyltransferase superfamily. Cation-independent O-methyltransferase family. COMT subfamily.

The catalysed reaction is nor-toralactone + S-adenosyl-L-methionine = toralactone + S-adenosyl-L-homocysteine + H(+). The enzyme catalyses toralactone + NADH + O2 + H(+) = 1-(3,4,5-trihydroxy-7-methoxynaphthalen-2-yl)propan-2-one + CO2 + NAD(+). Its pathway is mycotoxin biosynthesis. Dual O-methyltransferase/FAD-dependent monooxygenase; part of the gene cluster that mediates the biosynthesis of cercosporin, a light-activated, non-host-selective toxin. The perylenequinone chromophore of cercosporin absorbs light energy to attain an electronically-activated triplet state and produces active oxygen species such as the hydroxyl radical, superoxide, hydrogen peroxide or singlet oxygen upon reaction with oxygen molecules. These reactive oxygen species cause damage to various cellular components including lipids, proteins and nucleic acids. The first step of cercosporin biosynthesis is performed by the polyketide synthase CTB1 which catalyzes the formation of nor-toralactone. The starter unit acyltransferase (SAT) domain of CTB1 initiates polyketide extension by the selective utilization of acetyl-CoA, which is elongated to the heptaketide in the beta-ketoacyl synthase (KS) domain by successive condensations with six malonyl units introduced by the malonyl acyltransferase (MAT) domain. The product template (PT) domain catalyzes C4-C9 and C2-C11 aldol cyclizations and dehydrations to a trihydroxynaphthalene, which is thought to be delivered to the thioesterase (TE) domain for product release. The bifunctional enzyme CTB3 then methylates nor-toralactone to toralactone before conducting an unusual oxidative aromatic ring opening. The O-methyltransferase CTB2 further methylates the nascent OH-6 of the CBT3 product, blocking further oxidation at this site before the reductase CTB6 reduces the 2-oxopropyl ketone at position C7, giving naphthalene. The FAD-dependent monooxygenase CTB5 in concert with the multicopper oxidase CTB12 are responsible for homodimerization of naphthalene with CTB7 installing the dioxepine moiety, finally producing cercosporin. The fasciclin domain-containing protein CTB11 might act with CTB5 and CTB12 whereas the roles of CTB9 and CTB10 have still to be elucidated. The sequence is that of Dual O-methyltransferase/FAD-dependent monooxygenase CTB3 from Cercospora beticola (Sugarbeet leaf spot fungus).